Reading from the N-terminus, the 438-residue chain is Glutamate--tRNA ligase 2 (438 aa).

The short motif at 6 to 16 is the 'HIGH' region element; sequence PSPTGDMHTGN. A 'KMSKS' region motif is present at residues 231–235; it reads KMSKR. Lys-234 is an ATP binding site.

It belongs to the class-I aminoacyl-tRNA synthetase family. Glutamate--tRNA ligase type 1 subfamily. In terms of assembly, monomer.

It is found in the cytoplasm. It catalyses the reaction tRNA(Glu) + L-glutamate + ATP = L-glutamyl-tRNA(Glu) + AMP + diphosphate. Catalyzes the attachment of glutamate to tRNA(Glu) in a two-step reaction: glutamate is first activated by ATP to form Glu-AMP and then transferred to the acceptor end of tRNA(Glu). The sequence is that of Glutamate--tRNA ligase 2 from Wolinella succinogenes (strain ATCC 29543 / DSM 1740 / CCUG 13145 / JCM 31913 / LMG 7466 / NCTC 11488 / FDC 602W) (Vibrio succinogenes).